A 317-amino-acid chain; its full sequence is Ricin B-like lectin EULS3 (317 aa).

A compositionally biased stretch (basic residues) spans methionine 1–histidine 11. The tract at residues methionine 1–proline 157 is disordered. The segment covering valine 25–proline 36 has biased composition (pro residues). The segment covering histidine 136–glycine 146 has biased composition (polar residues). Positions threonine 168–phenylalanine 315 constitute a Ricin B-type lectin domain.

As to quaternary structure, interacts (via N-terminus) with ATS3A and ATS3B. In terms of tissue distribution, expressed in roots, rosette leaves, stems, cauline leaves and flowers.

It localises to the nucleus. It is found in the cytoplasm. In terms of biological role, lectin which binds carbohydrates in vitro. Interacts through its lectin domain with glycan structures containing one or more Lewis X, Lewis Y or lactosamine motifs. May play a role in abiotic stress responses. May play a role in abscisic acid-induced stomatal closure. May play a role in disease resistance against Pseudomonas syringae through its involvement in stomatal movement. The protein is Ricin B-like lectin EULS3 of Arabidopsis thaliana (Mouse-ear cress).